Here is a 555-residue protein sequence, read N- to C-terminus: Dihydroxy-acid dehydratase (555 aa).

Asp78 is a binding site for Mg(2+). Cys119 is a binding site for [2Fe-2S] cluster. Residues Asp120 and Lys121 each contribute to the Mg(2+) site. The residue at position 121 (Lys121) is an N6-carboxylysine. Residue Cys195 coordinates [2Fe-2S] cluster. Mg(2+) is bound at residue Glu444. Ser470 serves as the catalytic Proton acceptor.

Belongs to the IlvD/Edd family. Homodimer. It depends on [2Fe-2S] cluster as a cofactor. The cofactor is Mg(2+).

It carries out the reaction (2R)-2,3-dihydroxy-3-methylbutanoate = 3-methyl-2-oxobutanoate + H2O. The enzyme catalyses (2R,3R)-2,3-dihydroxy-3-methylpentanoate = (S)-3-methyl-2-oxopentanoate + H2O. The protein operates within amino-acid biosynthesis; L-isoleucine biosynthesis; L-isoleucine from 2-oxobutanoate: step 3/4. Its pathway is amino-acid biosynthesis; L-valine biosynthesis; L-valine from pyruvate: step 3/4. Functionally, functions in the biosynthesis of branched-chain amino acids. Catalyzes the dehydration of (2R,3R)-2,3-dihydroxy-3-methylpentanoate (2,3-dihydroxy-3-methylvalerate) into 2-oxo-3-methylpentanoate (2-oxo-3-methylvalerate) and of (2R)-2,3-dihydroxy-3-methylbutanoate (2,3-dihydroxyisovalerate) into 2-oxo-3-methylbutanoate (2-oxoisovalerate), the penultimate precursor to L-isoleucine and L-valine, respectively. This Dehalococcoides mccartyi (strain CBDB1) protein is Dihydroxy-acid dehydratase.